The sequence spans 502 residues: UDP-N-acetylmuramoylalanine--D-glutamate ligase (502 aa).

129–135 is a binding site for ATP; that stretch reads GTNGKTT. Residues 288–307 are disordered; it reads APDETTSRRRKRDGAHTPDI.

Belongs to the MurCDEF family.

It is found in the cytoplasm. It catalyses the reaction UDP-N-acetyl-alpha-D-muramoyl-L-alanine + D-glutamate + ATP = UDP-N-acetyl-alpha-D-muramoyl-L-alanyl-D-glutamate + ADP + phosphate + H(+). The protein operates within cell wall biogenesis; peptidoglycan biosynthesis. Its function is as follows. Cell wall formation. Catalyzes the addition of glutamate to the nucleotide precursor UDP-N-acetylmuramoyl-L-alanine (UMA). This chain is UDP-N-acetylmuramoylalanine--D-glutamate ligase, found in Burkholderia ambifaria (strain ATCC BAA-244 / DSM 16087 / CCUG 44356 / LMG 19182 / AMMD) (Burkholderia cepacia (strain AMMD)).